The sequence spans 162 residues: RNA pyrophosphohydrolase (162 aa).

The region spanning 7–149 is the Nudix hydrolase domain; that stretch reads EYRPCVGIML…KKEVYKKVIE (143 aa). A Nudix box motif is present at residues 40 to 61; the sequence is GGVDEGEELEQAALRELLEEVG.

It belongs to the Nudix hydrolase family. RppH subfamily. It depends on a divalent metal cation as a cofactor.

In terms of biological role, accelerates the degradation of transcripts by removing pyrophosphate from the 5'-end of triphosphorylated RNA, leading to a more labile monophosphorylated state that can stimulate subsequent ribonuclease cleavage. This chain is RNA pyrophosphohydrolase, found in Wolbachia pipientis subsp. Culex pipiens (strain wPip).